We begin with the raw amino-acid sequence, 87 residues long: Large ribosomal subunit protein bL31B (87 aa).

The protein belongs to the bacterial ribosomal protein bL31 family. Type B subfamily. In terms of assembly, part of the 50S ribosomal subunit.

This Burkholderia vietnamiensis (strain G4 / LMG 22486) (Burkholderia cepacia (strain R1808)) protein is Large ribosomal subunit protein bL31B.